The following is a 254-amino-acid chain: 3-deoxy-manno-octulosonate cytidylyltransferase (254 aa).

This sequence belongs to the KdsB family.

It localises to the cytoplasm. The catalysed reaction is 3-deoxy-alpha-D-manno-oct-2-ulosonate + CTP = CMP-3-deoxy-beta-D-manno-octulosonate + diphosphate. Its pathway is nucleotide-sugar biosynthesis; CMP-3-deoxy-D-manno-octulosonate biosynthesis; CMP-3-deoxy-D-manno-octulosonate from 3-deoxy-D-manno-octulosonate and CTP: step 1/1. It functions in the pathway bacterial outer membrane biogenesis; lipopolysaccharide biosynthesis. In terms of biological role, activates KDO (a required 8-carbon sugar) for incorporation into bacterial lipopolysaccharide in Gram-negative bacteria. The sequence is that of 3-deoxy-manno-octulosonate cytidylyltransferase from Polynucleobacter necessarius subsp. necessarius (strain STIR1).